An 848-amino-acid chain; its full sequence is Beta-galactosidase 11 (848 aa).

Positions 1–23 are cleaved as a signal peptide; the sequence is MSAAAVLAVVAAAVAALAAAASG. N29 is a glycosylation site (N-linked (GlcNAc...) asparagine). The Proton donor role is filled by E189. Residue E260 is the Nucleophile of the active site. N261, N472, and N783 each carry an N-linked (GlcNAc...) asparagine glycan. The SUEL-type lectin domain maps to 750–837; it reads GGLKPTAVLS…GTLAVQAKCS (88 aa).

This sequence belongs to the glycosyl hydrolase 35 family.

Its subcellular location is the secreted. The protein resides in the extracellular space. The protein localises to the apoplast. The catalysed reaction is Hydrolysis of terminal non-reducing beta-D-galactose residues in beta-D-galactosides.. This is Beta-galactosidase 11 from Oryza sativa subsp. japonica (Rice).